We begin with the raw amino-acid sequence, 130 residues long: kinetoplast-associated protein 2-2 (130 aa).

The propeptide occupies 1 to 10 (MLRRTVSNFA). Positions 95–130 (ETKQAQRAKAQKAQKKPKSAKSKVKKAAKKAKKSKK) are disordered. Residues 103–130 (KAQKAQKKPKSAKSKVKKAAKKAKKSKK) show a composition bias toward basic residues.

This sequence belongs to the KAP family. In terms of assembly, associates with the kinetoplast DNA network.

It localises to the mitochondrion matrix. It is found in the kinetoplast. Histone H1-like DNA-binding protein involved in the organization and segregation of kinetoplast DNA (kDNA). The mitochondrial DNA of kinetoplastid protozoa consists of about 5,000 minicircles and 20 to 30 maxicircles. These circular DNAs are held together by catenation into a highly organized compact disk structure referred to as a kinetoplast DNA (kDNA) network. Binds preferentially to a specific fragment of minicircle DNA and is able to compact kDNA networks through DNA charge neutralization and condensation. This chain is kinetoplast-associated protein 2-2 (KAP2-2), found in Crithidia fasciculata.